A 288-amino-acid polypeptide reads, in one-letter code: DegV domain-containing protein DR_1903 (288 aa).

A DegV domain is found at 2 to 280 (IAVTTESTAD…PGVVAVLAFP (279 aa)). Residues Thr-59 and Thr-93 each contribute to the hexadecanoate site.

In terms of biological role, may bind long-chain fatty acids, such as palmitate, and may play a role in lipid transport or fatty acid metabolism. The chain is DegV domain-containing protein DR_1903 from Deinococcus radiodurans (strain ATCC 13939 / DSM 20539 / JCM 16871 / CCUG 27074 / LMG 4051 / NBRC 15346 / NCIMB 9279 / VKM B-1422 / R1).